The following is a 479-amino-acid chain: Anaerobic nitric oxide reductase flavorubredoxin (479 aa).

Residues leucine 30–isoleucine 210 form a zinc metallo-hydrolase region. Fe cation is bound by residues histidine 79, glutamate 81, aspartate 83, histidine 147, aspartate 166, and histidine 227. The Flavodoxin-like domain occupies isoleucine 254–alanine 393. FMN-binding positions include threonine 260–asparagine 264 and alanine 342–leucine 369. The Rubredoxin-like domain occupies glycine 423–leucine 474. The Fe cation site is built by cysteine 428, cysteine 431, cysteine 461, and cysteine 464.

It in the N-terminal section; belongs to the zinc metallo-hydrolase group 3 family. Homotetramer. Fe cation serves as cofactor. The cofactor is FMN.

The protein localises to the cytoplasm. The protein operates within nitrogen metabolism; nitric oxide reduction. Functionally, anaerobic nitric oxide reductase; uses NADH to detoxify nitric oxide (NO), protecting several 4Fe-4S NO-sensitive enzymes. Has at least 2 reductase partners, only one of which (NorW, flavorubredoxin reductase) has been identified. NO probably binds to the di-iron center; electrons enter from the NorW at rubredoxin and are transferred sequentially to the FMN center and the di-iron center. Also able to function as an aerobic oxygen reductase. This Salmonella choleraesuis (strain SC-B67) protein is Anaerobic nitric oxide reductase flavorubredoxin.